We begin with the raw amino-acid sequence, 61 residues long: Short neurotoxin 1 (61 aa).

Cystine bridges form between cysteine 3/cysteine 23, cysteine 17/cysteine 40, cysteine 42/cysteine 53, and cysteine 54/cysteine 59.

It belongs to the three-finger toxin family. Short-chain subfamily. Type I alpha-neurotoxin sub-subfamily. As to expression, expressed by the venom gland.

It is found in the secreted. Binds to muscle nicotinic acetylcholine receptor (nAChR) and inhibit acetylcholine from binding to the receptor, thereby impairing neuromuscular transmission. In Naja philippinensis (Philippine cobra), this protein is Short neurotoxin 1.